Reading from the N-terminus, the 209-residue chain is Urease accessory protein UreG (209 aa).

A GTP-binding site is contributed by 11 to 18; sequence GPVGSGKT.

The protein belongs to the SIMIBI class G3E GTPase family. UreG subfamily. In terms of assembly, homodimer. UreD, UreF and UreG form a complex that acts as a GTP-hydrolysis-dependent molecular chaperone, activating the urease apoprotein by helping to assemble the nickel containing metallocenter of UreC. The UreE protein probably delivers the nickel.

It localises to the cytoplasm. In terms of biological role, facilitates the functional incorporation of the urease nickel metallocenter. This process requires GTP hydrolysis, probably effectuated by UreG. This Edwardsiella ictaluri (strain 93-146) protein is Urease accessory protein UreG.